The primary structure comprises 270 residues: Phosphatidylglycerol--prolipoprotein diacylglyceryl transferase (270 aa).

A run of 4 helical transmembrane segments spans residues 19–39 (FPVY…LWLA), 53–73 (FVDL…AYYV), 92–112 (QGGL…IIYA), and 117–137 (ISFW…QAIG). R138 is a binding site for a 1,2-diacyl-sn-glycero-3-phospho-(1'-sn-glycerol). 3 consecutive transmembrane segments (helical) span residues 178 to 198 (HPTF…LLLL), 206 to 226 (GELF…VEEL), and 236 to 256 (LRIA…FIIV).

This sequence belongs to the Lgt family.

It is found in the cell membrane. It carries out the reaction L-cysteinyl-[prolipoprotein] + a 1,2-diacyl-sn-glycero-3-phospho-(1'-sn-glycerol) = an S-1,2-diacyl-sn-glyceryl-L-cysteinyl-[prolipoprotein] + sn-glycerol 1-phosphate + H(+). The protein operates within protein modification; lipoprotein biosynthesis (diacylglyceryl transfer). Its function is as follows. Catalyzes the transfer of the diacylglyceryl group from phosphatidylglycerol to the sulfhydryl group of the N-terminal cysteine of a prolipoprotein, the first step in the formation of mature lipoproteins. This Bacillus cytotoxicus (strain DSM 22905 / CIP 110041 / 391-98 / NVH 391-98) protein is Phosphatidylglycerol--prolipoprotein diacylglyceryl transferase.